A 324-amino-acid chain; its full sequence is Beta-ketoacyl-[acyl-carrier-protein] synthase III (324 aa).

Residues cysteine 112 and histidine 249 contribute to the active site. The segment at 250–254 (QANDR) is ACP-binding. The active site involves asparagine 279.

The protein belongs to the thiolase-like superfamily. FabH family. As to quaternary structure, homodimer.

It is found in the cytoplasm. It catalyses the reaction malonyl-[ACP] + acetyl-CoA + H(+) = 3-oxobutanoyl-[ACP] + CO2 + CoA. It functions in the pathway lipid metabolism; fatty acid biosynthesis. Catalyzes the condensation reaction of fatty acid synthesis by the addition to an acyl acceptor of two carbons from malonyl-ACP. Catalyzes the first condensation reaction which initiates fatty acid synthesis and may therefore play a role in governing the total rate of fatty acid production. Possesses both acetoacetyl-ACP synthase and acetyl transacylase activities. Its substrate specificity determines the biosynthesis of branched-chain and/or straight-chain of fatty acids. The protein is Beta-ketoacyl-[acyl-carrier-protein] synthase III of Streptococcus pneumoniae serotype 19F (strain G54).